The following is a 289-amino-acid chain: MMARPRNHRPSARKSSHSTLVFAVLIMSTFVILILLAFGILSVPSNNAGSSKANDLTSIVRKTLQRSGEDDSKNERWVEIISWEPRASVYHNFLTKEECKYLIELAKPHMEKSTVVDEKTGKSTDSRVRTSSGTFLARGRDKTIREIEKRISDFTFIPVEHGEGLQVLHYEIGQKYEPHYDYFMDEYNTRNGGQRIATVLMYLSDVEEGGETVFPAAKGNYSAVPWWNELSECGKGGLSVKPKMGDALLFWSMTPDATLDPSSLHGGCAVIKGNKWSSTKWLRVHEYKV.

The chain crosses the membrane as a helical; Signal-anchor for type II membrane protein span at residues 20-40 (LVFAVLIMSTFVILILLAFGI). The Lumenal segment spans residues 41–289 (LSVPSNNAGS…KWLRVHEYKV (249 aa)). A Fe2OG dioxygenase domain is found at 161–284 (HGEGLQVLHY…KWSSTKWLRV (124 aa)). Histidine 179 and aspartate 181 together coordinate Fe cation. A glycan (N-linked (GlcNAc...) asparagine) is linked at asparagine 220. Histidine 265 lines the Fe cation pocket. Residue lysine 275 participates in 2-oxoglutarate binding.

The protein belongs to the P4HA family. Fe(2+) serves as cofactor. L-ascorbate is required as a cofactor.

It is found in the endoplasmic reticulum membrane. The catalysed reaction is L-prolyl-[collagen] + 2-oxoglutarate + O2 = trans-4-hydroxy-L-prolyl-[collagen] + succinate + CO2. Its function is as follows. Catalyzes the post-translational formation of 4-hydroxyproline in -Xaa-Pro-Gly- sequences in proline-rich peptide sequences of plant glycoproteins and other proteins. Hydroxyprolines are important constituent of many plant cell wall glycoproteins such as extensins, hydroxyproline-rich glycoproteins, lectins and arabinogalactan proteins. This is Probable prolyl 4-hydroxylase 10 from Arabidopsis thaliana (Mouse-ear cress).